Here is a 310-residue protein sequence, read N- to C-terminus: Formimidoylglutamase (310 aa).

Mn(2+) is bound by residues His120, Asp148, His150, Asp152, Asp233, and Asp235.

This sequence belongs to the arginase family. The cofactor is Mn(2+).

The catalysed reaction is N-formimidoyl-L-glutamate + H2O = formamide + L-glutamate. The protein operates within amino-acid degradation; L-histidine degradation into L-glutamate; L-glutamate from N-formimidoyl-L-glutamate (hydrolase route): step 1/1. Functionally, catalyzes the conversion of N-formimidoyl-L-glutamate to L-glutamate and formamide. The sequence is that of Formimidoylglutamase from Nocardia farcinica (strain IFM 10152).